The primary structure comprises 340 residues: Guanine nucleotide-binding protein subunit beta-4 (340 aa).

N-acetylserine is present on Ser-2. A Phosphoserine modification is found at Ser-2. WD repeat units lie at residues 53–92 (GHLA…KMHA), 95–134 (LRSS…GNVR), 141–179 (GHTG…QTTT), 182–221 (GHSG…CRQS), and 224–263 (GHVS…ELLL). At His-266 the chain carries Phosphohistidine. 2 WD repeats span residues 268-307 (NIIC…RAGV) and 310-339 (GHDN…LRIW).

The protein belongs to the WD repeat G protein beta family. G proteins are composed of 3 units, alpha, beta and gamma. Strongly expressed in lung and placenta, whereas it is weakly expressed in brain and heart. Abundantly expressed in the axons and Schwann cells of peripheral nerves.

Functionally, guanine nucleotide-binding proteins (G proteins) are involved as a modulator or transducer in various transmembrane signaling systems. The beta and gamma chains are required for the GTPase activity, for replacement of GDP by GTP, and for G protein-effector interaction. The protein is Guanine nucleotide-binding protein subunit beta-4 (GNB4) of Homo sapiens (Human).